The chain runs to 318 residues: L-malyl-CoA/beta-methylmalyl-CoA lyase (318 aa).

Residues Phe19, Arg24, Lys30, and Arg76 each contribute to the substrate site. Residues Glu141 and Asp168 each contribute to the Mg(2+) site. Substrate is bound by residues 167-168 (AD) and 251-252 (IH).

This sequence belongs to the HpcH/HpaI aldolase family. In terms of assembly, homohexamer. Dimer of trimers. Mg(2+) serves as cofactor. The cofactor is Mn(2+).

It carries out the reaction (S)-malyl-CoA = glyoxylate + acetyl-CoA. The catalysed reaction is (2R,3S)-beta-methylmalyl-CoA = propanoyl-CoA + glyoxylate. In vitro inhibited by EDTA. Involved in the ethylmalonyl-CoA pathway for acetate assimilation. Catalyzes the reversible condensation of glyoxylate and acetyl-CoA to L-malyl-CoA and the reversible condensation of glyoxylate and propionyl-CoA to beta-methylmalyl-CoA. This Rhodobacter capsulatus (Rhodopseudomonas capsulata) protein is L-malyl-CoA/beta-methylmalyl-CoA lyase.